The following is a 334-amino-acid chain: Phosphate acyltransferase (334 aa).

The protein belongs to the PlsX family. In terms of assembly, homodimer. Probably interacts with PlsY.

It localises to the cytoplasm. The enzyme catalyses a fatty acyl-[ACP] + phosphate = an acyl phosphate + holo-[ACP]. It participates in lipid metabolism; phospholipid metabolism. Functionally, catalyzes the reversible formation of acyl-phosphate (acyl-PO(4)) from acyl-[acyl-carrier-protein] (acyl-ACP). This enzyme utilizes acyl-ACP as fatty acyl donor, but not acyl-CoA. This Caldicellulosiruptor bescii (strain ATCC BAA-1888 / DSM 6725 / KCTC 15123 / Z-1320) (Anaerocellum thermophilum) protein is Phosphate acyltransferase.